The following is a 240-amino-acid chain: MGRAFEYRRAAKEKRWDKMSKVFPKLAKAITLAAKDGGSEPDTNAKLRTAILNAKAQNMPKDNIDAAIKRASSKEGNLSEITYEGKANFGVLIIMECMTDNPTRTIANLKSYFNKTQGASIVPNGSLEFMFNRKSVFECLKNEVENLKLSLEDLEFALIDYGLEELEEVGDKIIIRGDYNSFKLLNEGFESLKLPILKAGLQRIATTPIELNDEQMELTEKLLDRIEDDDDVVALYTNIE.

This sequence belongs to the TACO1 family.

It is found in the cytoplasm. The protein is Probable transcriptional regulatory protein HPAG1_0159 of Helicobacter pylori (strain HPAG1).